A 435-amino-acid chain; its full sequence is Probable xyloglucan galactosyltransferase GT19 (435 aa).

Topologically, residues 1–6 are cytoplasmic; that stretch reads MASKST. Residues 7-23 traverse the membrane as a helical; Signal-anchor for type II membrane protein segment; it reads VTTLTIFFFFFFFFIEP. Topologically, residues 24 to 435 are lumenal; it reads KVQSQQISAV…GVLDRIISRV (412 aa). N-linked (GlcNAc...) asparagine glycosylation is found at Asn140, Asn203, and Asn277.

It belongs to the glycosyltransferase 47 family. Expressed in roots, hypocotyls, cotyledons, leaves, stems, stamens and pollen grains.

Its subcellular location is the golgi apparatus membrane. Functions in xyloglucan synthesis by adding side chains to the xylosylated glucan backbone. Involved in the galactosylation of hemicellulose xyloglucan. In Arabidopsis thaliana (Mouse-ear cress), this protein is Probable xyloglucan galactosyltransferase GT19.